We begin with the raw amino-acid sequence, 218 residues long: Adenylate kinase (218 aa).

10–15 (GAGKGT) provides a ligand contact to ATP. The interval 30–59 (STGDMLRAAVKAGSEMGLKAKAVMDAGQLV) is NMP. Residues T31, R36, 57–59 (QLV), 85–88 (GFPR), and Q92 contribute to the AMP site. Positions 122 to 159 (GRRVHEASGRTYHLVYNPPKVEGKDDVTGEDLVQRADD) are LID. ATP-binding positions include R123 and 132–133 (TY). The AMP site is built by R156 and R167. Residue G203 participates in ATP binding.

Belongs to the adenylate kinase family. As to quaternary structure, monomer.

The protein localises to the cytoplasm. The enzyme catalyses AMP + ATP = 2 ADP. The protein operates within purine metabolism; AMP biosynthesis via salvage pathway; AMP from ADP: step 1/1. Its function is as follows. Catalyzes the reversible transfer of the terminal phosphate group between ATP and AMP. Plays an important role in cellular energy homeostasis and in adenine nucleotide metabolism. The polypeptide is Adenylate kinase (Marinomonas sp. (strain MWYL1)).